Consider the following 388-residue polypeptide: Probable proton-coupled zinc antiporter SLC30A3 (388 aa).

Residues 1–13 (MEPSPTTGGSETT) are compositionally biased toward polar residues. Disordered stretches follow at residues 1–30 (MEPS…GLRL) and 35–54 (TEAP…SFHH). The Cytoplasmic segment spans residues 1–75 (MEPSPTTGGS…TPERMQAQRQ (75 aa)). The chain crosses the membrane as a helical span at residues 76–96 (LCTACAVCCVFMAGEVVGGYL). Over 97 to 105 (AHSLAIMTD) the chain is Lumenal. A helical membrane pass occupies residues 106–126 (AAHLLADVGSMMGSLFSLWLS). H108 and D112 together coordinate Zn(2+). Residues 127–145 (TRPATRTMTFGWHRSETLG) are Cytoplasmic-facing. The helical transmembrane segment at 146-166 (ALASVVSLWMVTGILLYLAFI) threads the bilayer. Residues 167-177 (RLLHSDYHIEG) are Lumenal-facing. Residues 178 to 198 (GAMLLTASIAVCANLLMAFVL) traverse the membrane as a helical segment. Residues 199-235 (HQAGPPHSHGSRGAEYAPLEEGSGEPLPLGNTSVRAA) lie on the Cytoplasmic side of the membrane. The chain crosses the membrane as a helical span at residues 236 to 256 (FVHVLGDLLQSLGVLIASILI). H238 and D242 together coordinate Zn(2+). The Lumenal segment spans residues 257–264 (YFKPQYKA). A helical transmembrane segment spans residues 265–285 (ADPISTFLFSICALGSTAPTL). Residues 286–388 (RDVLRVLMEG…CLRCQEPPQA (103 aa)) lie on the Cytoplasmic side of the membrane.

The protein belongs to the cation diffusion facilitator (CDF) transporter (TC 2.A.4) family. SLC30A subfamily. In terms of assembly, homodimer. Homodimerization could regulate efficiency of zinc transport. Interacts with TMEM163.

The protein localises to the cytoplasmic vesicle. It localises to the secretory vesicle. The protein resides in the synaptic vesicle membrane. Its subcellular location is the synapse. It is found in the synaptosome. The protein localises to the late endosome membrane. It localises to the lysosome membrane. It carries out the reaction Zn(2+)(in) + 2 H(+)(out) = Zn(2+)(out) + 2 H(+)(in). Probable proton-coupled zinc ion antiporter mediating the import of zinc from cytoplasm into synaptic vesicles and participating to cellular zinc ion homeostasis in the brain. This Bos taurus (Bovine) protein is Probable proton-coupled zinc antiporter SLC30A3.